The chain runs to 102 residues: Small ribosomal subunit protein uS10 (102 aa).

It belongs to the universal ribosomal protein uS10 family. Part of the 30S ribosomal subunit.

Involved in the binding of tRNA to the ribosomes. The polypeptide is Small ribosomal subunit protein uS10 (Akkermansia muciniphila (strain ATCC BAA-835 / DSM 22959 / JCM 33894 / BCRC 81048 / CCUG 64013 / CIP 107961 / Muc)).